A 111-amino-acid polypeptide reads, in one-letter code: uncharacterized protein (111 aa).

This is an uncharacterized protein from Saccharolobus solfataricus (strain ATCC 35092 / DSM 1617 / JCM 11322 / P2) (Sulfolobus solfataricus).